A 119-amino-acid polypeptide reads, in one-letter code: Putative mating-type protein A2 (119 aa).

Positions 38-100 form a DNA-binding region, homeobox; TALE-type; that stretch reads KPYRGHRFTK…NRRRKEKTIT (63 aa).

It belongs to the TALE/M-ATYP homeobox family.

It localises to the nucleus. Its function is as follows. Probably not a functional protein. Cells lacking A2 show no obvious alterations in mating, sporulation and cell growth. The chain is Putative mating-type protein A2 (MATA2) from Saccharomyces cerevisiae (Baker's yeast).